Consider the following 101-residue polypeptide: Small ribosomal subunit protein bS18c (101 aa).

This sequence belongs to the bacterial ribosomal protein bS18 family. As to quaternary structure, part of the 30S ribosomal subunit.

The protein localises to the plastid. It is found in the chloroplast. The sequence is that of Small ribosomal subunit protein bS18c from Morus indica (Mulberry).